Reading from the N-terminus, the 1341-residue chain is DNA-directed RNA polymerase subunit beta (1341 aa).

This sequence belongs to the RNA polymerase beta chain family. In terms of assembly, the RNAP catalytic core consists of 2 alpha, 1 beta, 1 beta' and 1 omega subunit. When a sigma factor is associated with the core the holoenzyme is formed, which can initiate transcription.

The catalysed reaction is RNA(n) + a ribonucleoside 5'-triphosphate = RNA(n+1) + diphosphate. Functionally, DNA-dependent RNA polymerase catalyzes the transcription of DNA into RNA using the four ribonucleoside triphosphates as substrates. The sequence is that of DNA-directed RNA polymerase subunit beta from Blochmanniella pennsylvanica (strain BPEN).